The chain runs to 530 residues: Chitin synthase 1 (530 aa).

Asparagine 17 is a glycosylation site (N-linked (GlcNAc...) asparagine). The disordered stretch occupies residues 22–94; that stretch reads QESSSNLIQQ…QANNNRKVTR (73 aa). Residues 24–56 are compositionally biased toward polar residues; the sequence is SSSNLIQQQQPGTNYARNQQTLSSLRSQKQQAE. Residues asparagine 118, asparagine 310, and asparagine 474 are each glycosylated (N-linked (GlcNAc...) asparagine). 2 helical membrane-spanning segments follow: residues 477–497 and 508–528; these read FFAG…GHGF and IYNV…LSFL.

This sequence belongs to the chitin synthase family. Class II subfamily.

The protein localises to the cell membrane. It catalyses the reaction [(1-&gt;4)-N-acetyl-beta-D-glucosaminyl](n) + UDP-N-acetyl-alpha-D-glucosamine = [(1-&gt;4)-N-acetyl-beta-D-glucosaminyl](n+1) + UDP + H(+). In terms of biological role, polymerizes chitin, a structural polymer of the cell wall and septum, by transferring the sugar moiety of UDP-GlcNAc to the non-reducing end of the growing chitin polymer. This Rhizopus delemar (strain RA 99-880 / ATCC MYA-4621 / FGSC 9543 / NRRL 43880) (Mucormycosis agent) protein is Chitin synthase 1.